Consider the following 290-residue polypeptide: S-adenosylmethionine-dependent nucleotide dehydratase (290 aa).

The Radical SAM core domain maps to 6–226; that stretch reads SGNNIIPSVN…VNRHSKNKFL (221 aa). [4Fe-4S] cluster is bound by residues cysteine 22, cysteine 26, and cysteine 29.

Belongs to the radical SAM superfamily. Viperin family. The cofactor is [4Fe-4S] cluster.

It carries out the reaction UTP + AH2 + S-adenosyl-L-methionine = 3'-deoxy-3',4'-didehydro-UTP + 5'-deoxyadenosine + L-methionine + A + H2O + H(+). In terms of biological role, expression of pVip47 in E.coli (strain MG1655) confers resistance to phage P1; has no effect against T7. Catalyzes the conversion of uridine triphosphate (UTP) to 3'-deoxy-3',4'-didehydro-UTP (ddhUTP), probably via a SAM-dependent radical mechanism. The modified nucleotide represses transcription from T7 RNA polymerase-directed genes (possibly by acting as chain terminators), strongly suggesting these nucleotides block viral polymerase transcription. How this protein allows bacteria to resist viruses that do not encode their own RNA polymerase (such as lambda, P1) is unknown. In Flammeovirga pacifica, this protein is S-adenosylmethionine-dependent nucleotide dehydratase.